Here is a 200-residue protein sequence, read N- to C-terminus: Ubiquitin-conjugating enzyme E2 K (200 aa).

Ala2 is subject to N-acetylalanine. The UBC core domain maps to Ile4–Gly154. Lys14 is modified (N6-acetyllysine; alternate). Lys14 participates in a covalent cross-link: Glycyl lysine isopeptide (Lys-Gly) (interchain with G-Cter in SUMO); alternate. Lys14 participates in a covalent cross-link: Glycyl lysine isopeptide (Lys-Gly) (interchain with G-Cter in SUMO1); alternate. Cys92 (glycyl thioester intermediate) is an active-site residue. Ser159 carries the phosphoserine modification. Residues Pro160–Asn200 enclose the UBA domain.

Belongs to the ubiquitin-conjugating enzyme family. In terms of assembly, interacts with RNF138/NARF. Interacts with BRCA1. Sumoylation at Lys-14 impairs catalytic activity.

Its subcellular location is the cytoplasm. The enzyme catalyses S-ubiquitinyl-[E1 ubiquitin-activating enzyme]-L-cysteine + [E2 ubiquitin-conjugating enzyme]-L-cysteine = [E1 ubiquitin-activating enzyme]-L-cysteine + S-ubiquitinyl-[E2 ubiquitin-conjugating enzyme]-L-cysteine.. Its pathway is protein modification; protein ubiquitination. In terms of biological role, accepts ubiquitin from the E1 complex and catalyzes its covalent attachment to other proteins. In vitro, in the presence or in the absence of BRCA1-BARD1 E3 ubiquitin-protein ligase complex, catalyzes the synthesis of 'Lys-48'-linked polyubiquitin chains. Does not transfer ubiquitin directly to but elongates monoubiquitinated substrate protein. Mediates the selective degradation of short-lived and abnormal proteins, such as the endoplasmic reticulum-associated degradation (ERAD) of misfolded lumenal proteins. Ubiquitinates huntingtin. May mediate foam cell formation by the suppression of apoptosis of lipid-bearing macrophages through ubiquitination and subsequence degradation of p53/TP53. Proposed to be involved in ubiquitination and proteolytic processing of NF-kappa-B; in vitro supports ubiquitination of NFKB1. This Bos taurus (Bovine) protein is Ubiquitin-conjugating enzyme E2 K (UBE2K).